Here is a 447-residue protein sequence, read N- to C-terminus: Argininosuccinate synthase (447 aa).

ATP contacts are provided by residues alanine 17–serine 25 and alanine 43. Residue tyrosine 99 coordinates L-citrulline. Residues glycine 129 and threonine 131 each contribute to the ATP site. 3 residues coordinate L-aspartate: threonine 131, asparagine 135, and aspartate 136. Asparagine 135 is a binding site for L-citrulline. An ATP-binding site is contributed by aspartate 136. L-citrulline contacts are provided by arginine 139 and serine 192. Aspartate 194 lines the ATP pocket. 3 residues coordinate L-citrulline: threonine 201, glutamate 203, and glutamate 280.

The protein belongs to the argininosuccinate synthase family. Type 2 subfamily. Homotetramer.

It is found in the cytoplasm. It catalyses the reaction L-citrulline + L-aspartate + ATP = 2-(N(omega)-L-arginino)succinate + AMP + diphosphate + H(+). The protein operates within amino-acid biosynthesis; L-arginine biosynthesis; L-arginine from L-ornithine and carbamoyl phosphate: step 2/3. The sequence is that of Argininosuccinate synthase from Escherichia coli O9:H4 (strain HS).